Reading from the N-terminus, the 151-residue chain is Large ribosomal subunit protein bL9 (151 aa).

Belongs to the bacterial ribosomal protein bL9 family.

Functionally, binds to the 23S rRNA. The sequence is that of Large ribosomal subunit protein bL9 from Pelodictyon phaeoclathratiforme (strain DSM 5477 / BU-1).